The following is a 554-amino-acid chain: Urocanate hydratase (554 aa).

Residues 49–50 (GG), Q127, 173–175 (GMG), E193, R198, 239–240 (NA), 260–264 (QTSAH), 270–271 (YI), and Y319 each bind NAD(+). C407 is a catalytic residue. G489 is an NAD(+) binding site.

This sequence belongs to the urocanase family. NAD(+) is required as a cofactor.

It is found in the cytoplasm. The enzyme catalyses 4-imidazolone-5-propanoate = trans-urocanate + H2O. It participates in amino-acid degradation; L-histidine degradation into L-glutamate; N-formimidoyl-L-glutamate from L-histidine: step 2/3. Catalyzes the conversion of urocanate to 4-imidazolone-5-propionate. This Bacillus velezensis (strain DSM 23117 / BGSC 10A6 / LMG 26770 / FZB42) (Bacillus amyloliquefaciens subsp. plantarum) protein is Urocanate hydratase.